Consider the following 269-residue polypeptide: tRNA (guanine-N(1)-)-methyltransferase (269 aa).

Residues G115 and 139 to 144 contribute to the S-adenosyl-L-methionine site; that span reads LGDYVL.

The protein belongs to the RNA methyltransferase TrmD family. As to quaternary structure, homodimer.

Its subcellular location is the cytoplasm. The catalysed reaction is guanosine(37) in tRNA + S-adenosyl-L-methionine = N(1)-methylguanosine(37) in tRNA + S-adenosyl-L-homocysteine + H(+). Functionally, specifically methylates guanosine-37 in various tRNAs. This Pseudarthrobacter chlorophenolicus (strain ATCC 700700 / DSM 12829 / CIP 107037 / JCM 12360 / KCTC 9906 / NCIMB 13794 / A6) (Arthrobacter chlorophenolicus) protein is tRNA (guanine-N(1)-)-methyltransferase.